We begin with the raw amino-acid sequence, 131 residues long: Small ribosomal subunit protein uS8 (131 aa).

Belongs to the universal ribosomal protein uS8 family. In terms of assembly, part of the 30S ribosomal subunit. Contacts proteins S5 and S12.

One of the primary rRNA binding proteins, it binds directly to 16S rRNA central domain where it helps coordinate assembly of the platform of the 30S subunit. This chain is Small ribosomal subunit protein uS8, found in Thiobacillus denitrificans (strain ATCC 25259 / T1).